The primary structure comprises 422 residues: 3-phosphoshikimate 1-carboxyvinyltransferase (422 aa).

3-phosphoshikimate contacts are provided by Lys-20, Ser-21, and Arg-25. Lys-20 is a phosphoenolpyruvate binding site. Residues Gly-91 and Arg-119 each contribute to the phosphoenolpyruvate site. The 3-phosphoshikimate site is built by Thr-163, Ser-164, Gln-165, Asp-305, Gln-328, and Lys-332. Gln-165 serves as a coordination point for phosphoenolpyruvate. Asp-305 acts as the Proton acceptor in catalysis. Residues Arg-336 and Arg-377 each contribute to the phosphoenolpyruvate site.

Belongs to the EPSP synthase family. As to quaternary structure, monomer.

The protein resides in the cytoplasm. It catalyses the reaction 3-phosphoshikimate + phosphoenolpyruvate = 5-O-(1-carboxyvinyl)-3-phosphoshikimate + phosphate. It functions in the pathway metabolic intermediate biosynthesis; chorismate biosynthesis; chorismate from D-erythrose 4-phosphate and phosphoenolpyruvate: step 6/7. Catalyzes the transfer of the enolpyruvyl moiety of phosphoenolpyruvate (PEP) to the 5-hydroxyl of shikimate-3-phosphate (S3P) to produce enolpyruvyl shikimate-3-phosphate and inorganic phosphate. The polypeptide is 3-phosphoshikimate 1-carboxyvinyltransferase (Ruminiclostridium cellulolyticum (strain ATCC 35319 / DSM 5812 / JCM 6584 / H10) (Clostridium cellulolyticum)).